Reading from the N-terminus, the 435-residue chain is Serine--tRNA ligase (435 aa).

240 to 242 (TAE) provides a ligand contact to L-serine. 271-273 (RSE) is an ATP binding site. Glu294 lines the L-serine pocket. 358–361 (EISS) provides a ligand contact to ATP. Ser393 serves as a coordination point for L-serine.

The protein belongs to the class-II aminoacyl-tRNA synthetase family. Type-1 seryl-tRNA synthetase subfamily. Homodimer. The tRNA molecule binds across the dimer.

It localises to the cytoplasm. It carries out the reaction tRNA(Ser) + L-serine + ATP = L-seryl-tRNA(Ser) + AMP + diphosphate + H(+). It catalyses the reaction tRNA(Sec) + L-serine + ATP = L-seryl-tRNA(Sec) + AMP + diphosphate + H(+). It participates in aminoacyl-tRNA biosynthesis; selenocysteinyl-tRNA(Sec) biosynthesis; L-seryl-tRNA(Sec) from L-serine and tRNA(Sec): step 1/1. In terms of biological role, catalyzes the attachment of serine to tRNA(Ser). Is also able to aminoacylate tRNA(Sec) with serine, to form the misacylated tRNA L-seryl-tRNA(Sec), which will be further converted into selenocysteinyl-tRNA(Sec). The chain is Serine--tRNA ligase from Cupriavidus metallidurans (strain ATCC 43123 / DSM 2839 / NBRC 102507 / CH34) (Ralstonia metallidurans).